The following is a 61-amino-acid chain: UPF0181 protein MS1074 (61 aa).

This sequence belongs to the UPF0181 family.

The polypeptide is UPF0181 protein MS1074 (Mannheimia succiniciproducens (strain KCTC 0769BP / MBEL55E)).